We begin with the raw amino-acid sequence, 123 residues long: Large ribosomal subunit protein bL12 (123 aa).

The protein belongs to the bacterial ribosomal protein bL12 family. In terms of assembly, homodimer. Part of the ribosomal stalk of the 50S ribosomal subunit. Forms a multimeric L10(L12)X complex, where L10 forms an elongated spine to which 2 to 4 L12 dimers bind in a sequential fashion. Binds GTP-bound translation factors.

In terms of biological role, forms part of the ribosomal stalk which helps the ribosome interact with GTP-bound translation factors. Is thus essential for accurate translation. This chain is Large ribosomal subunit protein bL12, found in Clostridium botulinum (strain ATCC 19397 / Type A).